The following is a 90-amino-acid chain: MSRTVFCVLLNKEADGLDFQLYPGELGKRIFDNISKEAWGQWQHKQTMLINEKKLNMMDPEHRKMLETEMEGFLFDGKDVVIDGYTPPSK.

It belongs to the Fe(2+)-trafficking protein family.

Functionally, could be a mediator in iron transactions between iron acquisition and iron-requiring processes, such as synthesis and/or repair of Fe-S clusters in biosynthetic enzymes. The polypeptide is Probable Fe(2+)-trafficking protein (Aliivibrio salmonicida (strain LFI1238) (Vibrio salmonicida (strain LFI1238))).